The primary structure comprises 374 residues: DNA replication and repair protein RecF (374 aa).

34 to 41 lines the ATP pocket; the sequence is GNNGSGKT.

The protein belongs to the RecF family.

It localises to the cytoplasm. Functionally, the RecF protein is involved in DNA metabolism; it is required for DNA replication and normal SOS inducibility. RecF binds preferentially to single-stranded, linear DNA. It also seems to bind ATP. This chain is DNA replication and repair protein RecF, found in Allorhizobium ampelinum (strain ATCC BAA-846 / DSM 112012 / S4) (Agrobacterium vitis (strain S4)).